Consider the following 742-residue polypeptide: Two-component response regulator-like PRR37 (742 aa).

The 119-residue stretch at 63 to 181 (KVLLVDSDDS…ELKNLWQHVW (119 aa)) folds into the Response regulatory domain. The span at 186 to 195 (SSSGSGSESG) shows a compositional bias: low complexity. Disordered stretches follow at residues 186 to 249 (SSSG…SWTK), 290 to 346 (PCTS…PLQN), 377 to 402 (QQAA…NRDN), 478 to 517 (MKSN…NKER), 533 to 568 (FHPA…GEVQ), 590 to 671 (NGGS…GNDM), and 697 to 742 (NFGK…AADR). Polar residues predominate over residues 236–248 (DNGSGTQAQSSWT). Residues 299-313 (KQKETNDDFKGKDLE) are compositionally biased toward basic and acidic residues. Over residues 318-330 (RNLNTAYQSSPNE) the composition is skewed to polar residues. Positions 331–341 (RSIKPTDRRNE) are enriched in basic and acidic residues. Residues 490-502 (GSNGSSNNNDMGS) show a composition bias toward low complexity. A compositionally biased stretch (polar residues) spans 503–512 (TTKNVVTKPS). A compositionally biased stretch (low complexity) spans 618 to 634 (NGSNSGSNNGSNGQNGS). The span at 656-667 (GPGGGNGSGSGS) shows a compositional bias: gly residues. One can recognise a CCT domain in the interval 682 to 724 (RVAAVIKFRQKRKERNFGKKVRYQSRKRLAEQRPRVRGQFVRQ). A compositionally biased stretch (basic residues) spans 697–708 (NFGKKVRYQSRK). A compositionally biased stretch (low complexity) spans 719 to 731 (GQFVRQAVQDQQQ).

This sequence belongs to the ARR-like family.

The protein localises to the nucleus. Functionally, probable transcription factor involved in the regulation of flowering time under long day (LD) conditions. Functions as a repressor of flowering. Controls flowering time by negatively regulating the expression of HD3A. Acts downstream of the phytochrome B to repress the expression of EHD1, an activator of the flowering promoter genes HD3A and RFT1. Controls photoperiodic flowering response. Seems to be one of the component of the circadian clock. Expression of several members of the ARR-like family is controlled by circadian rhythm. The particular coordinated sequential expression of PRR73, PRR37, PRR95, PRR59 and PPR1 result to circadian waves that may be at the basis of the endogenous circadian clock. This chain is Two-component response regulator-like PRR37, found in Oryza sativa subsp. japonica (Rice).